The primary structure comprises 103 residues: Non-histone chromosomal protein HMG-14B (103 aa).

A disordered region spans residues 1–103 (MPKRKVAASR…AVEKEEVKSE (103 aa)). Over residues 29-50 (VPDKAEPKAKALAAKDKSENKK) the composition is skewed to basic and acidic residues. Residues 51–60 (AQSKGKKGPK) show a composition bias toward basic residues. The span at 94–103 (AVEKEEVKSE) shows a compositional bias: basic and acidic residues.

The protein belongs to the HMGN family.

The protein resides in the nucleus. Its function is as follows. Binds to the inner side of the nucleosomal DNA thus altering the interaction between the DNA and the histone octamer. May be involved in the process which maintains transcribable genes in a unique chromatin conformation. In Gallus gallus (Chicken), this protein is Non-histone chromosomal protein HMG-14B (HMG14).